A 106-amino-acid chain; its full sequence is Small ribosomal subunit protein uS10 (106 aa).

The protein belongs to the universal ribosomal protein uS10 family. In terms of assembly, part of the 30S ribosomal subunit.

Functionally, involved in the binding of tRNA to the ribosomes. The polypeptide is Small ribosomal subunit protein uS10 (Prochlorococcus marinus (strain MIT 9515)).